The following is a 154-amino-acid chain: AP-1 complex subunit sigma-3 (154 aa).

The protein belongs to the adaptor complexes small subunit family. Adaptor protein complex 1 (AP-1) is a heterotetramer composed of two large adaptins (gamma-type subunit AP1G1 and beta-type subunit AP1B1), a medium adaptin (mu-type subunit AP1M1 or AP1M2) and a small adaptin (sigma-type subunit AP1S1 or AP1S2 or AP1S3). Widely expressed.

It localises to the golgi apparatus. Its subcellular location is the cytoplasmic vesicle membrane. It is found in the membrane. The protein localises to the clathrin-coated pit. In terms of biological role, subunit of clathrin-associated adaptor protein complex 1 that plays a role in protein sorting in the late-Golgi/trans-Golgi network (TGN) and/or endosomes. The AP complexes mediate both the recruitment of clathrin to membranes and the recognition of sorting signals within the cytosolic tails of transmembrane cargo molecules. Involved in TLR3 trafficking. The chain is AP-1 complex subunit sigma-3 (AP1S3) from Homo sapiens (Human).